Reading from the N-terminus, the 119-residue chain is MFKKNDRSQSRTRRHMRVRKKIFGTAERPRLSVYRSEKHIYAQLIDDVEGKTLVAASSSEKGFDGVGSNKEGAKLVGKMVAEKALEKGLKKVVFDRGGFIYHGRIKELAEGAREAGLDF.

The protein belongs to the universal ribosomal protein uL18 family. Part of the 50S ribosomal subunit; part of the 5S rRNA/L5/L18/L25 subcomplex. Contacts the 5S and 23S rRNAs.

Its function is as follows. This is one of the proteins that bind and probably mediate the attachment of the 5S RNA into the large ribosomal subunit, where it forms part of the central protuberance. The polypeptide is Large ribosomal subunit protein uL18 (Clostridium botulinum (strain ATCC 19397 / Type A)).